The following is a 424-amino-acid chain: Solute carrier family 67 member A1 (424 aa).

10 helical membrane passes run 26-46, 59-79, 90-110, 156-176, 184-204, 243-263, 276-296, 312-332, 334-354, and 391-411; these read ILLT…QFSI, IAFG…GPVF, AALT…AAAS, LGLC…TLVS, AILA…CIPA, IFLV…MFSI, AGYL…LVIG, VLVF…FHFC, LVPG…SMLI, and FGVP…LLVL.

This sequence belongs to the major facilitator (TC 2.A.1) superfamily. Organic cation transporter (TC 2.A.1.19) family. In terms of assembly, interacts with RNF167. Expressed at high levels in adult and fetal kidney and liver, and adult colon. Expressed in fetal renal proximal tubules (at protein level). Expressed at lower levels in heart, brain and lung.

The protein resides in the apical cell membrane. May act as a transporter of organic cations based on a proton efflux antiport mechanism. May play a role in the transport of chloroquine and quinidine-related compounds in kidney. Plays a role in the regulation of lipid metabolism. The chain is Solute carrier family 67 member A1 from Homo sapiens (Human).